Here is a 657-residue protein sequence, read N- to C-terminus: Methionine--tRNA ligase (657 aa).

The 'HIGH' region signature appears at 13 to 23 (YYPSGNLHIGH). A 'KMSKS' region motif is present at residues 308 to 312 (KMSKS). Residue lysine 311 participates in ATP binding. The tRNA-binding domain maps to 557–657 (DFDKVEIKAA…SAIPNGAVIK (101 aa)).

Belongs to the class-I aminoacyl-tRNA synthetase family. MetG type 2B subfamily. In terms of assembly, homodimer.

It localises to the cytoplasm. It catalyses the reaction tRNA(Met) + L-methionine + ATP = L-methionyl-tRNA(Met) + AMP + diphosphate. Its function is as follows. Is required not only for elongation of protein synthesis but also for the initiation of all mRNA translation through initiator tRNA(fMet) aminoacylation. The sequence is that of Methionine--tRNA ligase from Staphylococcus aureus (strain COL).